The sequence spans 158 residues: MFGISFSELLLVGLVALLVLGPERLPGAARTAGLWIGRLKRSFNAIKQEVEREIGADEIRRQLHNEHILSMEDEARKMFAPNQPSENSPEPANPPPAPAAAEAASPVHNQAAHHEIGPAQPAAPKTELSLEKTAKPADAGTPVPAPPAHDSSLPPRAP.

The chain crosses the membrane as a helical span at residues 1-21 (MFGISFSELLLVGLVALLVLG). Residues 73–158 (DEARKMFAPN…HDSSLPPRAP (86 aa)) are disordered. Over residues 80–90 (APNQPSENSPE) the composition is skewed to low complexity.

This sequence belongs to the TatB family. In terms of assembly, the Tat system comprises two distinct complexes: a TatABC complex, containing multiple copies of TatA, TatB and TatC subunits, and a separate TatA complex, containing only TatA subunits. Substrates initially bind to the TatABC complex, which probably triggers association of the separate TatA complex to form the active translocon.

It is found in the cell inner membrane. Its function is as follows. Part of the twin-arginine translocation (Tat) system that transports large folded proteins containing a characteristic twin-arginine motif in their signal peptide across membranes. Together with TatC, TatB is part of a receptor directly interacting with Tat signal peptides. TatB may form an oligomeric binding site that transiently accommodates folded Tat precursor proteins before their translocation. This chain is Sec-independent protein translocase protein TatB, found in Pseudomonas syringae pv. syringae (strain B728a).